We begin with the raw amino-acid sequence, 763 residues long: uncharacterized protein (763 aa).

Positions 380–607 (DSVLNPFNTN…YNIKVITMRL (228 aa)) constitute a TR mART core domain. The chain crosses the membrane as a helical span at residues 684-700 (SYVSIYALLCPLLTNIY).

Its subcellular location is the membrane. This is an uncharacterized protein from Acanthamoeba polyphaga mimivirus (APMV).